Consider the following 295-residue polypeptide: NAD kinase (295 aa).

Aspartate 72 functions as the Proton acceptor in the catalytic mechanism. Residues 72-73 (DG), 146-147 (ND), arginine 157, lysine 174, aspartate 176, 187-192 (TAYALS), and glutamine 247 contribute to the NAD(+) site.

Belongs to the NAD kinase family. It depends on a divalent metal cation as a cofactor.

It localises to the cytoplasm. The enzyme catalyses NAD(+) + ATP = ADP + NADP(+) + H(+). Involved in the regulation of the intracellular balance of NAD and NADP, and is a key enzyme in the biosynthesis of NADP. Catalyzes specifically the phosphorylation on 2'-hydroxyl of the adenosine moiety of NAD to yield NADP. The sequence is that of NAD kinase from Ectopseudomonas mendocina (strain ymp) (Pseudomonas mendocina).